The following is a 281-amino-acid chain: MNDTQNPLHGAEASPLGKPVAYRDTYAPELLFPIARQLKRDEIGVRADALPFCGEDLWNAYELSWLNPRGKPVVALAEFRVPADTPRLVESKSLKLYLNSFNQSRFDDAAAVRMAIARDLSAAAGGAVGVAVWPLGGQAERRFAAPEGVCIDDLDVAIDTYQPDPTLLSAGDEVVSETLYSHLLKTNCLVTGQPDWGMVAVRYTGPRIDRAGLLRYIVSFREHNEFHEQCVERVFCDITARCRPQRLAVWARYTRRGGLDINPFRASDRDQRADEAMEIRQ.

Residue 89–91 (VES) coordinates substrate. 91–92 (SK) contributes to the NADPH binding site. Catalysis depends on C188, which acts as the Thioimide intermediate. D195 acts as the Proton donor in catalysis. Residue 227–228 (HE) participates in substrate binding. 256 to 257 (RG) serves as a coordination point for NADPH.

Belongs to the GTP cyclohydrolase I family. QueF type 2 subfamily. Homodimer.

It localises to the cytoplasm. It catalyses the reaction 7-aminomethyl-7-carbaguanine + 2 NADP(+) = 7-cyano-7-deazaguanine + 2 NADPH + 3 H(+). The protein operates within tRNA modification; tRNA-queuosine biosynthesis. Its function is as follows. Catalyzes the NADPH-dependent reduction of 7-cyano-7-deazaguanine (preQ0) to 7-aminomethyl-7-deazaguanine (preQ1). This is NADPH-dependent 7-cyano-7-deazaguanine reductase from Azoarcus sp. (strain BH72).